The following is a 193-amino-acid chain: dITP/XTP pyrophosphatase (193 aa).

7 to 12 serves as a coordination point for substrate; the sequence is SENENK. Residue Asp65 is the Proton acceptor of the active site. Residue Asp65 participates in Mg(2+) binding. Substrate is bound by residues Ser66, 144–147, Lys167, and 172–173; these read FGYD and HR.

This sequence belongs to the HAM1 NTPase family. As to quaternary structure, homodimer. Mg(2+) is required as a cofactor.

It catalyses the reaction XTP + H2O = XMP + diphosphate + H(+). It carries out the reaction dITP + H2O = dIMP + diphosphate + H(+). The catalysed reaction is ITP + H2O = IMP + diphosphate + H(+). Functionally, pyrophosphatase that catalyzes the hydrolysis of nucleoside triphosphates to their monophosphate derivatives, with a high preference for the non-canonical purine nucleotides XTP (xanthosine triphosphate), dITP (deoxyinosine triphosphate) and ITP. Seems to function as a house-cleaning enzyme that removes non-canonical purine nucleotides from the nucleotide pool, thus preventing their incorporation into DNA/RNA and avoiding chromosomal lesions. The chain is dITP/XTP pyrophosphatase from Tropheryma whipplei (strain Twist) (Whipple's bacillus).